The sequence spans 880 residues: Alanine--tRNA ligase (880 aa).

Residues H567, H571, C669, and H673 each coordinate Zn(2+).

This sequence belongs to the class-II aminoacyl-tRNA synthetase family. The cofactor is Zn(2+).

The protein resides in the cytoplasm. It catalyses the reaction tRNA(Ala) + L-alanine + ATP = L-alanyl-tRNA(Ala) + AMP + diphosphate. Functionally, catalyzes the attachment of alanine to tRNA(Ala) in a two-step reaction: alanine is first activated by ATP to form Ala-AMP and then transferred to the acceptor end of tRNA(Ala). Also edits incorrectly charged Ser-tRNA(Ala) and Gly-tRNA(Ala) via its editing domain. This Syntrophomonas wolfei subsp. wolfei (strain DSM 2245B / Goettingen) protein is Alanine--tRNA ligase.